We begin with the raw amino-acid sequence, 354 residues long: GTPase Obg (354 aa).

Positions 1-159 constitute an Obg domain; it reads MKFLDQCKIY…LWVWLRLKLI (159 aa). The 169-residue stretch at 160 to 328 folds into the OBG-type G domain; sequence ADVGLVGLPN…LLRAAFTQVR (169 aa). GTP is bound by residues 166-173, 191-195, 213-216, 280-283, and 309-311; these read GLPNAGKS, FTTLT, DIPG, NKVD, and SGV. Residues S173 and T193 each contribute to the Mg(2+) site. The interval 333 to 354 is disordered; that stretch reads ETPAEAAIDEAPEEETPGGWQP. Positions 339–348 are enriched in acidic residues; sequence AIDEAPEEET.

The protein belongs to the TRAFAC class OBG-HflX-like GTPase superfamily. OBG GTPase family. As to quaternary structure, monomer. The cofactor is Mg(2+).

The protein resides in the cytoplasm. In terms of biological role, an essential GTPase which binds GTP, GDP and possibly (p)ppGpp with moderate affinity, with high nucleotide exchange rates and a fairly low GTP hydrolysis rate. Plays a role in control of the cell cycle, stress response, ribosome biogenesis and in those bacteria that undergo differentiation, in morphogenesis control. The polypeptide is GTPase Obg (Caulobacter sp. (strain K31)).